Here is a 149-residue protein sequence, read N- to C-terminus: Nucleoside diphosphate kinase (149 aa).

The ATP site is built by K9, F57, R85, T91, R102, and N112. H115 acts as the Pros-phosphohistidine intermediate in catalysis.

The protein belongs to the NDK family. As to quaternary structure, homotetramer. Mg(2+) is required as a cofactor.

The protein localises to the cytoplasm. The catalysed reaction is a 2'-deoxyribonucleoside 5'-diphosphate + ATP = a 2'-deoxyribonucleoside 5'-triphosphate + ADP. The enzyme catalyses a ribonucleoside 5'-diphosphate + ATP = a ribonucleoside 5'-triphosphate + ADP. In terms of biological role, major role in the synthesis of nucleoside triphosphates other than ATP. The ATP gamma phosphate is transferred to the NDP beta phosphate via a ping-pong mechanism, using a phosphorylated active-site intermediate. The sequence is that of Nucleoside diphosphate kinase from Desulfitobacterium hafniense (strain Y51).